The sequence spans 72 residues: uncharacterized protein (72 aa).

The protein belongs to the phage portal family. HK97 subfamily.

This is an uncharacterized protein from Rickettsia conorii (strain ATCC VR-613 / Malish 7).